A 155-amino-acid polypeptide reads, in one-letter code: MQCPHCHHNSSRVVDSRPTDGGRAIRRRRECENCGFRFTTFERVEQTPLLVIKKNGTREEFNREKILKGLIRAAEKRPVTMEQMQSIVDSVENQLRAIGENEVSSQAIGEFVMSKLADVDDVAYIRFASVYRQFKDMSVFMQELQDMMKKEKTKK.

Residues 1–10 (MQCPHCHHNS) show a composition bias toward basic residues. A disordered region spans residues 1-21 (MQCPHCHHNSSRVVDSRPTDG). A zinc finger spans residues 3 to 34 (CPHCHHNSSRVVDSRPTDGGRAIRRRRECENC). Residues 49–139 (LLVIKKNGTR…VYRQFKDMSV (91 aa)) enclose the ATP-cone domain.

It belongs to the NrdR family. The cofactor is Zn(2+).

In terms of biological role, negatively regulates transcription of bacterial ribonucleotide reductase nrd genes and operons by binding to NrdR-boxes. This Lacticaseibacillus casei (strain BL23) (Lactobacillus casei) protein is Transcriptional repressor NrdR.